A 394-amino-acid chain; its full sequence is Elongation factor Tu (394 aa).

A tr-type G domain is found at 10-204; the sequence is KPHINVGTIG…ALDKYIPEPQ (195 aa). Residues 19-26 are G1; it reads GHVDHGKT. 19-26 serves as a coordination point for GTP; sequence GHVDHGKT. Threonine 26 is a binding site for Mg(2+). A G2 region spans residues 60–64; the sequence is GITIN. The segment at 81–84 is G3; the sequence is DCPG. Residues 81 to 85 and 136 to 139 contribute to the GTP site; these read DCPGH and NKCD. The G4 stretch occupies residues 136 to 139; that stretch reads NKCD. The tract at residues 174–176 is G5; it reads SAL.

The protein belongs to the TRAFAC class translation factor GTPase superfamily. Classic translation factor GTPase family. EF-Tu/EF-1A subfamily. In terms of assembly, monomer.

The protein resides in the cytoplasm. The enzyme catalyses GTP + H2O = GDP + phosphate + H(+). Its function is as follows. GTP hydrolase that promotes the GTP-dependent binding of aminoacyl-tRNA to the A-site of ribosomes during protein biosynthesis. The protein is Elongation factor Tu of Hamiltonella defensa subsp. Acyrthosiphon pisum (strain 5AT).